The chain runs to 423 residues: Adenylosuccinate synthetase (423 aa).

GTP is bound by residues 12-18 (GDEGKGK) and 40-42 (GHT). Asp-13 acts as the Proton acceptor in catalysis. Mg(2+) is bound by residues Asp-13 and Gly-40. IMP contacts are provided by residues 13 to 16 (DEGK), 38 to 41 (NAGH), Thr-129, Arg-143, Gln-224, Thr-239, and Arg-303. The active-site Proton donor is His-41. 299–305 (SVTGRQR) is a substrate binding site. Residues Arg-305, 331–333 (KGD), and 412–414 (SVG) contribute to the GTP site.

It belongs to the adenylosuccinate synthetase family. As to quaternary structure, homodimer. Mg(2+) serves as cofactor.

It is found in the cytoplasm. The catalysed reaction is IMP + L-aspartate + GTP = N(6)-(1,2-dicarboxyethyl)-AMP + GDP + phosphate + 2 H(+). It functions in the pathway purine metabolism; AMP biosynthesis via de novo pathway; AMP from IMP: step 1/2. Its function is as follows. Plays an important role in the de novo pathway of purine nucleotide biosynthesis. Catalyzes the first committed step in the biosynthesis of AMP from IMP. The chain is Adenylosuccinate synthetase from Flavobacterium johnsoniae (strain ATCC 17061 / DSM 2064 / JCM 8514 / BCRC 14874 / CCUG 350202 / NBRC 14942 / NCIMB 11054 / UW101) (Cytophaga johnsonae).